Reading from the N-terminus, the 364-residue chain is Probable endopolygalacturonase B (364 aa).

Positions methionine 1 to alanine 20 are cleaved as a signal peptide. The propeptide occupies alanine 21–arginine 29. The cysteines at positions 32 and 47 are disulfide-linked. N-linked (GlcNAc...) asparagine glycans are attached at residues asparagine 138 and asparagine 141. PbH1 repeat units lie at residues serine 159–serine 188, serine 189–serine 210, glycine 211–serine 231, valine 240–threonine 261, valine 269–glutamine 291, and threonine 303–alanine 324. Aspartate 203 (proton donor) is an active-site residue. Cysteine 205 and cysteine 221 are oxidised to a cystine. Residue histidine 225 is part of the active site. Residues cysteine 331 and cysteine 336 are joined by a disulfide bond. Asparagine 338 carries N-linked (GlcNAc...) asparagine glycosylation. A disulfide bridge links cysteine 355 with cysteine 364.

The protein belongs to the glycosyl hydrolase 28 family.

It is found in the secreted. It carries out the reaction (1,4-alpha-D-galacturonosyl)n+m + H2O = (1,4-alpha-D-galacturonosyl)n + (1,4-alpha-D-galacturonosyl)m.. Involved in maceration and soft-rotting of plant tissue. Hydrolyzes the 1,4-alpha glycosidic bonds of de-esterified pectate in the smooth region of the plant cell wall. This chain is Probable endopolygalacturonase B (pgaB), found in Aspergillus fumigatus (strain ATCC MYA-4609 / CBS 101355 / FGSC A1100 / Af293) (Neosartorya fumigata).